The sequence spans 231 residues: DNA mismatch repair protein MutH (231 aa).

Belongs to the MutH family.

Its subcellular location is the cytoplasm. In terms of biological role, sequence-specific endonuclease that cleaves unmethylated GATC sequences. It is involved in DNA mismatch repair. In Salmonella paratyphi A (strain ATCC 9150 / SARB42), this protein is DNA mismatch repair protein MutH.